Here is a 573-residue protein sequence, read N- to C-terminus: SHC-transforming protein 2 (573 aa).

The PID domain maps to 125–307 (LGPGVSYIVR…TGLEESAWGD (183 aa)). The SH2 domain maps to 478-569 (WYHGRMSRRA…ESELHLRGVV (92 aa)).

In terms of assembly, interacts with the Trk receptors in a phosphotyrosine-dependent manner and MEGF12. Once activated, binds to GRB2. Phosphorylated on tyrosine by the Trk receptors.

In terms of biological role, signaling adapter that couples activated growth factor receptors to signaling pathway in neurons. Involved in the signal transduction pathways of neurotrophin-activated Trk receptors in cortical neurons. This is SHC-transforming protein 2 (Shc2) from Rattus norvegicus (Rat).